The primary structure comprises 375 residues: S-adenosylmethionine:tRNA ribosyltransferase-isomerase (375 aa).

The protein belongs to the QueA family. As to quaternary structure, monomer.

The protein resides in the cytoplasm. The catalysed reaction is 7-aminomethyl-7-carbaguanosine(34) in tRNA + S-adenosyl-L-methionine = epoxyqueuosine(34) in tRNA + adenine + L-methionine + 2 H(+). It participates in tRNA modification; tRNA-queuosine biosynthesis. Functionally, transfers and isomerizes the ribose moiety from AdoMet to the 7-aminomethyl group of 7-deazaguanine (preQ1-tRNA) to give epoxyqueuosine (oQ-tRNA). The chain is S-adenosylmethionine:tRNA ribosyltransferase-isomerase from Rickettsia typhi (strain ATCC VR-144 / Wilmington).